The following is a 286-amino-acid chain: Phosphatidylserine decarboxylase proenzyme (286 aa).

Active-site charge relay system; for autoendoproteolytic cleavage activity residues include aspartate 91, histidine 148, and serine 251. Residue serine 251 is the Schiff-base intermediate with substrate; via pyruvic acid; for decarboxylase activity of the active site. At serine 251 the chain carries Pyruvic acid (Ser); by autocatalysis.

It belongs to the phosphatidylserine decarboxylase family. PSD-B subfamily. Prokaryotic type I sub-subfamily. Heterodimer of a large membrane-associated beta subunit and a small pyruvoyl-containing alpha subunit. It depends on pyruvate as a cofactor. In terms of processing, is synthesized initially as an inactive proenzyme. Formation of the active enzyme involves a self-maturation process in which the active site pyruvoyl group is generated from an internal serine residue via an autocatalytic post-translational modification. Two non-identical subunits are generated from the proenzyme in this reaction, and the pyruvate is formed at the N-terminus of the alpha chain, which is derived from the carboxyl end of the proenzyme. The autoendoproteolytic cleavage occurs by a canonical serine protease mechanism, in which the side chain hydroxyl group of the serine supplies its oxygen atom to form the C-terminus of the beta chain, while the remainder of the serine residue undergoes an oxidative deamination to produce ammonia and the pyruvoyl prosthetic group on the alpha chain. During this reaction, the Ser that is part of the protease active site of the proenzyme becomes the pyruvoyl prosthetic group, which constitutes an essential element of the active site of the mature decarboxylase.

It localises to the cell membrane. The enzyme catalyses a 1,2-diacyl-sn-glycero-3-phospho-L-serine + H(+) = a 1,2-diacyl-sn-glycero-3-phosphoethanolamine + CO2. The protein operates within phospholipid metabolism; phosphatidylethanolamine biosynthesis; phosphatidylethanolamine from CDP-diacylglycerol: step 2/2. In terms of biological role, catalyzes the formation of phosphatidylethanolamine (PtdEtn) from phosphatidylserine (PtdSer). This is Phosphatidylserine decarboxylase proenzyme from Marinobacter nauticus (strain ATCC 700491 / DSM 11845 / VT8) (Marinobacter aquaeolei).